Reading from the N-terminus, the 411-residue chain is NADH-quinone oxidoreductase subunit D (411 aa).

The protein belongs to the complex I 49 kDa subunit family. In terms of assembly, NDH-1 is composed of 14 different subunits. Subunits NuoB, C, D, E, F, and G constitute the peripheral sector of the complex.

It localises to the cell inner membrane. The enzyme catalyses a quinone + NADH + 5 H(+)(in) = a quinol + NAD(+) + 4 H(+)(out). In terms of biological role, NDH-1 shuttles electrons from NADH, via FMN and iron-sulfur (Fe-S) centers, to quinones in the respiratory chain. The immediate electron acceptor for the enzyme in this species is believed to be ubiquinone. Couples the redox reaction to proton translocation (for every two electrons transferred, four hydrogen ions are translocated across the cytoplasmic membrane), and thus conserves the redox energy in a proton gradient. The protein is NADH-quinone oxidoreductase subunit D of Phenylobacterium zucineum (strain HLK1).